Reading from the N-terminus, the 185-residue chain is Large ribosomal subunit protein uL5 (185 aa).

It belongs to the universal ribosomal protein uL5 family. Part of the 50S ribosomal subunit; part of the 5S rRNA/L5/L18/L25 subcomplex. Contacts the 5S rRNA and the P site tRNA. Forms a bridge to the 30S subunit in the 70S ribosome.

Its function is as follows. This is one of the proteins that bind and probably mediate the attachment of the 5S RNA into the large ribosomal subunit, where it forms part of the central protuberance. In the 70S ribosome it contacts protein S13 of the 30S subunit (bridge B1b), connecting the 2 subunits; this bridge is implicated in subunit movement. Contacts the P site tRNA; the 5S rRNA and some of its associated proteins might help stabilize positioning of ribosome-bound tRNAs. In Sinorhizobium medicae (strain WSM419) (Ensifer medicae), this protein is Large ribosomal subunit protein uL5.